Here is a 127-residue protein sequence, read N- to C-terminus: Fluoride-specific ion channel FluC 1 (127 aa).

4 helical membrane passes run 4-24 (TLLA…LVSL), 35-55 (VGTL…LALF), 71-91 (TGFC…VYLI), and 101-121 (GTIL…FILV). Glycine 75 and threonine 78 together coordinate Na(+).

The protein belongs to the fluoride channel Fluc/FEX (TC 1.A.43) family.

The protein localises to the cell inner membrane. The enzyme catalyses fluoride(in) = fluoride(out). Na(+) is not transported, but it plays an essential structural role and its presence is essential for fluoride channel function. Functionally, fluoride-specific ion channel. Important for reducing fluoride concentration in the cell, thus reducing its toxicity. The chain is Fluoride-specific ion channel FluC 1 from Yersinia pseudotuberculosis serotype I (strain IP32953).